A 302-amino-acid chain; its full sequence is Probable lipid kinase YegS-like (302 aa).

A DAGKc domain is found at 1-129 (MDKDKVLLVL…IDLGAVNGKL (129 aa)). Residues T39, 65-71 (GDGTLRE), and T92 contribute to the ATP site. Mg(2+) is bound by residues R210, D213, and L215. E268 serves as the catalytic Proton acceptor.

The protein belongs to the diacylglycerol/lipid kinase family. YegS lipid kinase subfamily. Mg(2+) serves as cofactor. The cofactor is Ca(2+).

It localises to the cytoplasm. In terms of biological role, probably phosphorylates lipids; the in vivo substrate is unknown. The polypeptide is Probable lipid kinase YegS-like (Pseudomonas aeruginosa (strain UCBPP-PA14)).